The chain runs to 198 residues: Protein hunchback (198 aa).

Disordered stretches follow at residues 16-116 and 158-198; these read SHHH…NPMQ and LTPP…KYMA. Positions 17–31 are enriched in basic residues; it reads HHHHHHHAHHSHHQH. Composition is skewed to low complexity over residues 35 to 46 and 68 to 83; these read SNSNSNASSPHQ and QQQQ…QQQQ. Polar residues predominate over residues 95–105; that stretch reads PSPSNNDQNSP. Over residues 179 to 198 the composition is skewed to basic and acidic residues; it reads EPEKEHDLMSNSSEDMKYMA.

It belongs to the hunchback C2H2-type zinc-finger protein family.

The protein localises to the nucleus. Its function is as follows. Gap class segmentation protein that controls development of head structures. In Drosophila cyrtoloma (Fruit fly), this protein is Protein hunchback (hb).